A 1507-amino-acid polypeptide reads, in one-letter code: Histone-lysine N-methyltransferase set-2 (1507 aa).

Residues 1–32 are disordered; that stretch reads MSTHDMNHHPPRKSHSKRDKPSSSNSGPKIEN. A compositionally biased stretch (basic residues) spans 9-18; sequence HPPRKSHSKR. The region spanning 128-199 is the RRM domain; the sequence is VSLFNMDDNC…QNLLATKCTP (72 aa). 5 disordered regions span residues 280–578, 650–697, 803–826, 842–1058, and 1163–1199; these read DYTM…QPQM, EPFS…EEPA, DEEK…SNHL, SSRG…GPII, and QKPR…FKPR. Over residues 296 to 315 the composition is skewed to pro residues; it reads PIPPPPIKEESPPPPPPPPV. The span at 316 to 327 shows a compositional bias: low complexity; that stretch reads ASVSNLAPVPSV. The span at 331–342 shows a compositional bias: polar residues; sequence YYNNIQPSSSTM. Positions 413–444 are enriched in basic and acidic residues; that stretch reads VKYETYKMEKRKIKYEGGNKKYEQVHIKERTA. Residues 456 to 465 show a composition bias toward low complexity; it reads SSESASGSSS. Over residues 478 to 488 the composition is skewed to basic residues; the sequence is KKKKRPKSPNR. A compositionally biased stretch (polar residues) spans 566–575; the sequence is HLQTPYQHVQ. Basic and acidic residues-rich tracts occupy residues 668–680 and 803–823; these read DVGR…KPSL and DEEK…EKPS. Basic residues predominate over residues 846 to 868; the sequence is FYRKQKPIPKSHPKHQEHHHHAK. Positions 869 to 908 are enriched in low complexity; that stretch reads ASVSTPVHSSSTSRNSSVAPTPQRTVSTSSSSSSAATSAR. Residues 941–951 are compositionally biased toward polar residues; it reads SFSSTSIQSSP. The segment covering 958 to 971 has biased composition (low complexity); sequence SSSSRTSSSSSTSS. Residues 973–982 are compositionally biased toward basic and acidic residues; sequence KQEETADEKS. Low complexity predominate over residues 990 to 1007; that stretch reads SSDESSTTGSTATSVVSS. A compositionally biased stretch (basic and acidic residues) spans 1015 to 1047; sequence QQEKTDGEPPKKKSQTDFISERVSKIEGEERPL. Over residues 1179-1190 the composition is skewed to pro residues; it reads EPPPTKRPAPPP. Positions 1340–1345 match the RxxxRR motif motif; it reads RLLQRR. Residues 1368–1485 form the SET domain; it reads KMIKFARSRI…KGEEITYDYK (118 aa). Position 1484 (Tyr-1484) interacts with S-adenosyl-L-methionine. Residues 1491 to 1507 enclose the Post-SET domain; sequence DKIDCLCGAKTCRGYLN.

This sequence belongs to the class V-like SAM-binding methyltransferase superfamily. Component of the Set1C/COMPASS complex (also known as the SET2 complex), which contains at least set-2, swd-2.1, cfp-1, rbbp-5, wdr-5.1, dpy-30 and ash-2. Expressed in all cells of embryo. In L1 larva, it is predominantly expressed in Z2 and Z3 primordial germ cells. In adults, it is predominantly expressed in the germline.

It localises to the nucleus. It carries out the reaction L-lysyl(4)-[histone H3] + 3 S-adenosyl-L-methionine = N(6),N(6),N(6)-trimethyl-L-lysyl(4)-[histone H3] + 3 S-adenosyl-L-homocysteine + 3 H(+). The enzyme catalyses N(6)-methyl-L-lysyl(4)-[histone H3] + S-adenosyl-L-methionine = N(6),N(6)-dimethyl-L-lysyl(4)-[histone H3] + S-adenosyl-L-homocysteine + H(+). The catalysed reaction is N(6),N(6)-dimethyl-L-lysyl(4)-[histone H3] + S-adenosyl-L-methionine = N(6),N(6),N(6)-trimethyl-L-lysyl(4)-[histone H3] + S-adenosyl-L-homocysteine + H(+). Catalytic component of the COMPASS (Set1C) complex that specifically mono-, di- and trimethylates histone H3 to form H3K4me1/2/3. Binds RNAs which might negatively affect its histone methyltransferase activity. COMPASS recognizes ubiquitinated H2B on one face of the nucleosome which stimulates the methylation of H3 on the opposing face. H3 'Lys-4' methylation represents a specific tag for epigenetic transcriptional activation. Implicated in the epigenetic inheritance of lifespan over several generations. Acts in the germline to limit the longevity of the soma, probably by regulating a lipid metabolism pathway that signals from the germline to the intestine, thereby preventing accumulation of mono-unsaturated fatty acids. Methylation in the germline is required for germline development and fertility, possibly by ensuring genome stability. May act redundantly with mes-3 and mes-4 proteins in the development of a fertile germline. Required for RNAi. Functions as an antagonist of hpl-1 and hpl-2 activity in growth and somatic gonad development. Cooperates with jmjd-3.1 and egl-27 to ensure robust transdifferentiation of the Y rectal cell to the PDA motor neuron during larval development. This Caenorhabditis elegans protein is Histone-lysine N-methyltransferase set-2 (set-2).